The chain runs to 284 residues: Putative ABC transporter ATP-binding protein sll0385 (284 aa).

The ABC transporter domain occupies 51-278; it reads IRVRELSFAY…QTLMESHGLE (228 aa). Residue 84–91 coordinates ATP; it reads GHNGCGKT.

It belongs to the ABC transporter superfamily.

It localises to the cell inner membrane. Probably part of an ABC transporter complex. Responsible for energy coupling to the transport system. The chain is Putative ABC transporter ATP-binding protein sll0385 from Synechocystis sp. (strain ATCC 27184 / PCC 6803 / Kazusa).